We begin with the raw amino-acid sequence, 301 residues long: MSFVKYLRRDNLLQLAGKPSLSRNYILQTCRTLIIETSPPEFVKLNRLSGSDSGIIEVNLDRPVTKNAINKEMLKSLQNAFESIHQDNSARVVMIRSLVPGVFCAGADLKERRTMSPSEVHTYVNSLRYMFSFIEALSIPTIAAIEGAALGGGLEMALACDLRICGENAVFGLPETGLAIIPGAGGTQRLSRLVGRSVSKELIFTGRKIDAIEAANKGLVNICVTAGEAHEKAIEMAQQINEKGPLAIKMAKKAIDEGIETNMASGLEVEEMCYQKLLNTQDRLEGLAAFAEKRKPLYTGN.

Residues 1 to 32 (MSFVKYLRRDNLLQLAGKPSLSRNYILQTCRT) constitute a mitochondrion transit peptide. Substrate-binding positions include 105-109 (AGADL) and glycine 152.

Belongs to the enoyl-CoA hydratase/isomerase family.

It is found in the mitochondrion. It carries out the reaction a (3S)-3-hydroxyacyl-CoA = a (2E)-enoyl-CoA + H2O. The catalysed reaction is a 4-saturated-(3S)-3-hydroxyacyl-CoA = a (3E)-enoyl-CoA + H2O. It participates in lipid metabolism; fatty acid beta-oxidation. Functionally, straight-chain enoyl-CoA thioesters from C4 up to at least C16 are processed, although with decreasing catalytic rate. This is Probable enoyl-CoA hydratase 2, mitochondrial from Arabidopsis thaliana (Mouse-ear cress).